The sequence spans 109 residues: Aquaporin-2 (109 aa).

The Cytoplasmic segment spans residues 1-6; the sequence is SIAFSR. A helical transmembrane segment spans residues 7-27; that stretch reads AVFAEFLATLLFVFFGLGSAL. Topologically, residues 28–35 are extracellular; sequence NWPSALPS. Residues 36–54 traverse the membrane as a helical segment; it reads TLQIAMAFGLGIGTLVQAL. Residues 55–59 lie on the Cytoplasmic side of the membrane; it reads GHVSG. An intramembrane region (discontinuously helical) is located at residues 60–69; the sequence is AHINPAVTVA. The NPA 1 signature appears at 63-65; that stretch reads NPA. Residues 70–80 are Cytoplasmic-facing; it reads CLVGCHVSFLR. A helical transmembrane segment spans residues 81–102; that stretch reads AAFYVAAQLLGAVAGAALLHEI. The Extracellular portion of the chain corresponds to 103–109; that stretch reads TPAEVRG.

Belongs to the MIP/aquaporin (TC 1.A.8) family. As to quaternary structure, homotetramer. Serine phosphorylation is necessary and sufficient for expression at the apical membrane. Endocytosis is not phosphorylation-dependent. In terms of processing, N-glycosylated.

It is found in the apical cell membrane. Its subcellular location is the basolateral cell membrane. The protein resides in the cell membrane. The protein localises to the cytoplasmic vesicle membrane. It localises to the golgi apparatus. It is found in the trans-Golgi network membrane. The catalysed reaction is H2O(in) = H2O(out). It carries out the reaction glycerol(in) = glycerol(out). Forms a water-specific channel that provides the plasma membranes of renal collecting duct with high permeability to water, thereby permitting water to move in the direction of an osmotic gradient. Plays an essential role in renal water homeostasis. Could also be permeable to glycerol. This Oryctolagus cuniculus (Rabbit) protein is Aquaporin-2.